The chain runs to 333 residues: Foldase protein PrsA (333 aa).

The first 22 residues, 1 to 22, serve as a signal peptide directing secretion; that stretch reads MKKSTKLLAGIVTLASAMTLAA. Cys-23 is lipidated: N-palmitoyl cysteine. A lipid anchor (S-diacylglycerol cysteine) is attached at Cys-23. Residues 145–240 form the PpiC domain; it reads TPEMTTQVTT…NKFYIVKVTK (96 aa). The tract at residues 301–333 is disordered; the sequence is DKKASKANTSKSDQKSSSDSSKDSQSSKSKSEK. Residues 312–322 show a composition bias toward basic and acidic residues; that stretch reads SDQKSSSDSSK. Over residues 323 to 333 the composition is skewed to low complexity; the sequence is DSQSSKSKSEK.

The protein belongs to the PrsA family.

It localises to the cell membrane. It catalyses the reaction [protein]-peptidylproline (omega=180) = [protein]-peptidylproline (omega=0). Functionally, plays a major role in protein secretion by helping the post-translocational extracellular folding of several secreted proteins. This Streptococcus equi subsp. equi (strain 4047) protein is Foldase protein PrsA.